A 361-amino-acid polypeptide reads, in one-letter code: Methyltransferase LUC1 (361 aa).

Residues Tyr18, Asn66, Asp89, Ser126, and Phe127 each coordinate S-adenosyl-L-homocysteine. Mg(2+) contacts are provided by Gln156 and Phe233.

It belongs to the methyltransferase superfamily. Type-7 methyltransferase family. Mg(2+) serves as cofactor.

It participates in mycotoxin biosynthesis. Functionally, methyltransferase; part of the gene cluster that mediates the biosynthesis of the mycotoxin lucilactaene and the lucilactaene-related compound NG-391 that act as cell cycle inhibitors with potent growth inhibitory activity against malarial parasites, moderate growth inhibitory activity against cancer cells, and no activity against bacteria and fungi. LUC1 performs the last step of the pathway and methylates the hydroxyl group of demethyllucilactaene at C-21 to yeald lucilactaene. The pathway begins with the hybrid PKS-NRPS synthetase LUC5 which is responsible for the condensation of one acetyl-coenzyme A (CoA) unit with six malonyl-CoA units and the amide linkage of the arising heptaketide and homoserine, subsequently releasing the first intermediate prelucilactaene B. Both the cytochrome P450 monooxygenase LUC2 and the hydrolase LUC6 function in parallel in modification of prelucilactaene B. LUC6 may catalyze the 2-pyrrolidone ring formation to form prelucilactaene C from prelucilactaene B, followed by C-15 hydroxylation by the same enzyme to give prelucilactaene D, which is then converted to prelucilactaene E by epoxidation, and finally to prelucilactaene F by cyclization. Prelucilactane D, prelucilactaene E, and prelucilactaene F can be converted to dihydrolucilactaene, NG391, and lucilactaene, respectively, via C-20 methyl group hydroxylation by the cytochrome P450 monooxygenase LUC2. However, LUC2, unlike FUS8 in fusarin C biosynthesis, is not enough for the full oxidation of the C-20 methyl group into carboxylic acid, which is a prerequisite for the final methylation step. The aldehyde dehydrogenase LUC3 is involved in the biosynthesis by further oxidation of the C-20 alcoholic analog prelucilactaene G into a carboxylic derivative. This unidentified carboxylic derivative may be converted to demethyllucilactaene. As the last step, the methyltransferase LUC1 methylates the hydroxyl group at C-21 of demethyllucilactaene to generate lucilactaene. This Fusarium sp protein is Methyltransferase LUC1.